Consider the following 83-residue polypeptide: Large ribosomal subunit protein eL31 (83 aa).

This sequence belongs to the eukaryotic ribosomal protein eL31 family.

In Methanococcus aeolicus (strain ATCC BAA-1280 / DSM 17508 / OCM 812 / Nankai-3), this protein is Large ribosomal subunit protein eL31.